The sequence spans 459 residues: MYRKALLGSTRLDILSYISSMEEDREIVEEVIECLIAHVKGLIHSKLIPEEEGEKILKALEELRASKEALFSIEAEDIHEAIEIYLKEKLGKTGGYLPLGRSRNDHVVCALRLKAKKALVEEIGLILELRKALIKKAEENVYTLMPLFTHLQPAQPSTFAHYLSAIIEELEDITKILFSGLGIVDKSSLGAGAIGGTSVLLDRGYMGGILFSDIITNSLYATSSRTFLLYSCFLSVLISIALSRIAEDFVIFSTPNFGYIKLPNEHLSTSSMMPQKKNPVTMEVARAWAGEAIGHLVAMMSILKALPSGYNLDMQEVNKHAFALFSGTIKTLKIFVDAMKRVEVNKENMKKDCDIFPILATDYAEKIAMNTGRPYREVYMEVASIIGEHESTEKIYSELSSKYGISISLEEGIKKPVVGSPNPEDVLEFLEKAKKNVEKDEKKLEELRQNENRDNVYNP.

The tract at residues 440 to 459 (DEKKLEELRQNENRDNVYNP) is disordered.

It belongs to the lyase 1 family. Argininosuccinate lyase subfamily.

The protein localises to the cytoplasm. The enzyme catalyses 2-(N(omega)-L-arginino)succinate = fumarate + L-arginine. It participates in amino-acid biosynthesis; L-arginine biosynthesis; L-arginine from L-ornithine and carbamoyl phosphate: step 3/3. This Pyrococcus furiosus (strain ATCC 43587 / DSM 3638 / JCM 8422 / Vc1) protein is Argininosuccinate lyase.